Reading from the N-terminus, the 84-residue chain is U4-theraphotoxin-Hhn1a (84 aa).

The N-terminal stretch at 1–22 (MKVTLIAILTCAAVLVLHTTAA) is a signal peptide. Residues 23-47 (EELEESQLMEVGMPDTELAAVDGER) constitute a propeptide that is removed on maturation. Intrachain disulfides connect Cys-51–Cys-65, Cys-55–Cys-76, and Cys-70–Cys-81.

The protein belongs to the neurotoxin 12 (Hwtx-2) family. 02 (Hwtx-2) subfamily. As to expression, expressed by the venom gland.

The protein resides in the secreted. Postsynaptic neurotoxin. The polypeptide is U4-theraphotoxin-Hhn1a (Cyriopagopus hainanus (Chinese bird spider)).